The primary structure comprises 184 residues: ATP-dependent protease subunit HslV (184 aa).

The active site involves T2. Residues G157, C160, and T163 each contribute to the Na(+) site.

It belongs to the peptidase T1B family. HslV subfamily. A double ring-shaped homohexamer of HslV is capped on each side by a ring-shaped HslU homohexamer. The assembly of the HslU/HslV complex is dependent on binding of ATP.

It is found in the cytoplasm. It carries out the reaction ATP-dependent cleavage of peptide bonds with broad specificity.. With respect to regulation, allosterically activated by HslU binding. In terms of biological role, protease subunit of a proteasome-like degradation complex believed to be a general protein degrading machinery. The protein is ATP-dependent protease subunit HslV of Vibrio vulnificus (strain CMCP6).